Reading from the N-terminus, the 182-residue chain is MEWDSTSVKETDVALYTKPQRKQSIRERYTSKFSNVEQNLLKTDDDDDDDNNNININNNNATITTTSTTTTTTTTSTTKTFTISTDNYDEDVNDDQDEGDSGYNNNNNNNNNNNNNNNNNNNNNNSNNNNNNNNKIKNKLNQLETSSDLDFNNQNNNNEDEDDEFLSKDDNIEEIQRNQKGN.

Positions 40-182 (LLKTDDDDDD…EEIQRNQKGN (143 aa)) are disordered. Residues 52–86 (NNININNNNATITTTSTTTTTTTTSTTKTFTISTD) are compositionally biased toward low complexity. The span at 87-100 (NYDEDVNDDQDEGD) shows a compositional bias: acidic residues. 2 stretches are compositionally biased toward low complexity: residues 104–134 (NNNN…NNNN) and 148–157 (DLDFNNQNNN). Positions 165 to 182 (FLSKDDNIEEIQRNQKGN) are enriched in basic and acidic residues.

This is an uncharacterized protein from Dictyostelium discoideum (Social amoeba).